The primary structure comprises 366 residues: Chorismate synthase (366 aa).

Residues R48 and R54 each coordinate NADP(+). FMN is bound by residues 125-127 (RSS), 238-239 (NA), G278, 293-297 (KPTSS), and R319.

The protein belongs to the chorismate synthase family. Homotetramer. FMNH2 is required as a cofactor.

It catalyses the reaction 5-O-(1-carboxyvinyl)-3-phosphoshikimate = chorismate + phosphate. The protein operates within metabolic intermediate biosynthesis; chorismate biosynthesis; chorismate from D-erythrose 4-phosphate and phosphoenolpyruvate: step 7/7. Catalyzes the anti-1,4-elimination of the C-3 phosphate and the C-6 proR hydrogen from 5-enolpyruvylshikimate-3-phosphate (EPSP) to yield chorismate, which is the branch point compound that serves as the starting substrate for the three terminal pathways of aromatic amino acid biosynthesis. This reaction introduces a second double bond into the aromatic ring system. The sequence is that of Chorismate synthase from Pseudoalteromonas atlantica (strain T6c / ATCC BAA-1087).